A 211-amino-acid chain; its full sequence is Proteasome subunit beta (211 aa).

The propeptide at 1–8 (MNQTLETG) is removed in mature form; by autocatalysis. Thr-9 serves as the catalytic Nucleophile.

Belongs to the peptidase T1B family. The 20S proteasome core is composed of 14 alpha and 14 beta subunits that assemble into four stacked heptameric rings, resulting in a barrel-shaped structure. The two inner rings, each composed of seven catalytic beta subunits, are sandwiched by two outer rings, each composed of seven alpha subunits. The catalytic chamber with the active sites is on the inside of the barrel. Has a gated structure, the ends of the cylinder being occluded by the N-termini of the alpha-subunits. Is capped at one or both ends by the proteasome regulatory ATPase, PAN.

It localises to the cytoplasm. It catalyses the reaction Cleavage of peptide bonds with very broad specificity.. With respect to regulation, the formation of the proteasomal ATPase PAN-20S proteasome complex, via the docking of the C-termini of PAN into the intersubunit pockets in the alpha-rings, triggers opening of the gate for substrate entry. Interconversion between the open-gate and close-gate conformations leads to a dynamic regulation of the 20S proteasome proteolysis activity. Functionally, component of the proteasome core, a large protease complex with broad specificity involved in protein degradation. The T.acidophilum proteasome is able to cleave oligopeptides after Tyr, Leu, Phe, and to a lesser extent after Glu and Arg. Thus, displays chymotrypsin-like activity and low level of caspase-like and trypsin-like activities. This is Proteasome subunit beta from Thermoplasma acidophilum (strain ATCC 25905 / DSM 1728 / JCM 9062 / NBRC 15155 / AMRC-C165).